The following is a 1106-amino-acid chain: Probable NAD-specific glutamate dehydrogenase (1106 aa).

The active site involves Lys654.

The protein belongs to the Glu/Leu/Phe/Val dehydrogenases family. In terms of assembly, homotetramer.

Its subcellular location is the cytoplasm. The catalysed reaction is L-glutamate + NAD(+) + H2O = 2-oxoglutarate + NH4(+) + NADH + H(+). In terms of biological role, NAD(+)-dependent glutamate dehydrogenase which degrades glutamate to ammonia and alpha-ketoglutarate. The polypeptide is Probable NAD-specific glutamate dehydrogenase (gdh2) (Schizosaccharomyces pombe (strain 972 / ATCC 24843) (Fission yeast)).